Reading from the N-terminus, the 337-residue chain is Large ribosomal subunit protein uL3 (337 aa).

Positions 1-29 are disordered; the sequence is MARHHQPRKGSVAFSPRKRAARETPRVKS.

It belongs to the universal ribosomal protein uL3 family. Part of the 50S ribosomal subunit. Forms a cluster with proteins L14 and L24e.

Its function is as follows. One of the primary rRNA binding proteins, it binds directly near the 3'-end of the 23S rRNA, where it nucleates assembly of the 50S subunit. The protein is Large ribosomal subunit protein uL3 of Methanothermobacter thermautotrophicus (strain ATCC 29096 / DSM 1053 / JCM 10044 / NBRC 100330 / Delta H) (Methanobacterium thermoautotrophicum).